Reading from the N-terminus, the 184-residue chain is Large ribosomal subunit protein uL6 (184 aa).

This sequence belongs to the universal ribosomal protein uL6 family. Part of the 50S ribosomal subunit.

In terms of biological role, this protein binds to the 23S rRNA, and is important in its secondary structure. It is located near the subunit interface in the base of the L7/L12 stalk, and near the tRNA binding site of the peptidyltransferase center. The chain is Large ribosomal subunit protein uL6 from Fervidobacterium nodosum (strain ATCC 35602 / DSM 5306 / Rt17-B1).